The primary structure comprises 870 residues: Valine--tRNA ligase (870 aa).

Positions 42 to 52 (PNVTGVLHIGH) match the 'HIGH' region motif. The 'KMSKS' region signature appears at 527–531 (KMSKS). Lys-530 is an ATP binding site. A coiled-coil region spans residues 800–870 (LENVDLSGIL…ISVELQNLRG (71 aa)).

Belongs to the class-I aminoacyl-tRNA synthetase family. ValS type 1 subfamily. As to quaternary structure, monomer.

It localises to the cytoplasm. It catalyses the reaction tRNA(Val) + L-valine + ATP = L-valyl-tRNA(Val) + AMP + diphosphate. Its function is as follows. Catalyzes the attachment of valine to tRNA(Val). As ValRS can inadvertently accommodate and process structurally similar amino acids such as threonine, to avoid such errors, it has a 'posttransfer' editing activity that hydrolyzes mischarged Thr-tRNA(Val) in a tRNA-dependent manner. The sequence is that of Valine--tRNA ligase from Campylobacter jejuni subsp. jejuni serotype O:2 (strain ATCC 700819 / NCTC 11168).